The chain runs to 81 residues: Bursicon (81 aa).

In terms of assembly, heterodimer of burs and pburs. Central nervous system. Coexpressed with CCAP in most CCAP-specific neurons. Coexpressed with pburs in the large bilateral lateral neurosecretory neurons of the first three unfused abdominal ganglia and in all anterior bilateral cell pairs in the thoracic ganglia.

The protein localises to the secreted. Final heterodimeric neurohormone released at the end of the molting cycle, involved in the sclerotization (tanning) of the insect cuticle, melanization and wing spreading. The polypeptide is Bursicon (burs) (Periplaneta americana (American cockroach)).